The chain runs to 446 residues: Phosphoglucosamine mutase (446 aa).

Catalysis depends on serine 102, which acts as the Phosphoserine intermediate. The Mg(2+) site is built by serine 102, aspartate 241, aspartate 243, and aspartate 245. Residue serine 102 is modified to Phosphoserine.

The protein belongs to the phosphohexose mutase family. Mg(2+) is required as a cofactor. Post-translationally, activated by phosphorylation.

The enzyme catalyses alpha-D-glucosamine 1-phosphate = D-glucosamine 6-phosphate. Functionally, catalyzes the conversion of glucosamine-6-phosphate to glucosamine-1-phosphate. This Idiomarina loihiensis (strain ATCC BAA-735 / DSM 15497 / L2-TR) protein is Phosphoglucosamine mutase.